We begin with the raw amino-acid sequence, 540 residues long: Aquaporin-5 (540 aa).

A disordered region spans residues 1-224 (MSGEGTDLPT…ESIDGYNYES (224 aa)). Topologically, residues 1-263 (MSGEGTDLPT…QWMNSNFKNH (263 aa)) are cytoplasmic. A compositionally biased stretch (polar residues) spans 25-44 (PGSSQQQLVPIAHTISSPSK). 4 stretches are compositionally biased toward basic and acidic residues: residues 119–133 (RARE…EREN), 140–155 (RARD…ERSR), 174–194 (YFDD…KGMR), and 204–214 (SGEKVRRKSTD). Residues 264 to 284 (FVATIGEFVGTTMFLFFAFAG) traverse the membrane as a helical segment. Topologically, residues 285-308 (TQVANIDSNTVNTTTGAATGFNIA) are extracellular. Asn-296 carries N-linked (GlcNAc...) asparagine glycosylation. A helical transmembrane segment spans residues 309–329 (VQLYIAVIFGFSLMVNVWIFF). Residues 330–332 (RIS) lie on the Cytoplasmic side of the membrane. A helical membrane pass occupies residues 333–353 (GGLFNPAVTLGMVLVGAIPIP). The Extracellular portion of the chain corresponds to 354-356 (RAA). A helical transmembrane segment spans residues 357–377 (CLFFAQILGGIAASGMVLGLF). Topologically, residues 378–393 (PTTFNVRTTLGASTST) are cytoplasmic. The chain crosses the membrane as a helical span at residues 394 to 414 (VQGVFIEAILTAELVFTIFML). Over 415-420 (AKEKHK) the chain is Extracellular. A helical transmembrane segment spans residues 421-441 (ATFIAPVGIGLALFIAEMVGV). Residues 442-467 (YYTGGSLNPARSFGPCVVSGSFDKEH) are Cytoplasmic-facing. The helical transmembrane segment at 468-488 (WIYWIGPITGTFIAVFFYKFI) threads the bilayer. Residues 489–540 (KMLEYEMANPGQDGDAKNDPTQNEKKREQILEERNRRYEKRNGSLRPGSRLS) lie on the Extracellular side of the membrane. The segment at 499-540 (GQDGDAKNDPTQNEKKREQILEERNRRYEKRNGSLRPGSRLS) is disordered. Basic and acidic residues predominate over residues 502–530 (GDAKNDPTQNEKKREQILEERNRRYEKRN). The N-linked (GlcNAc...) asparagine glycan is linked to Asn-530.

The protein belongs to the MIP/aquaporin (TC 1.A.8) family.

The protein localises to the membrane. The catalysed reaction is H2O(in) = H2O(out). In terms of biological role, water channel required to facilitate the transport of water across membranes. May play a role in the vegetative growth. This Botryotinia fuckeliana (strain B05.10) (Noble rot fungus) protein is Aquaporin-5.